We begin with the raw amino-acid sequence, 707 residues long: D-(-)-3-hydroxybutyrate oligomer hydrolase (707 aa).

The signal sequence occupies residues 1–32 (MASVFKVRSASGHVPVVRTLAAMMAVTVVLTA). The Charge relay system role is filled by serine 321.

Belongs to the D-(-)-3-hydroxybutyrate oligomer hydrolase family.

Its subcellular location is the secreted. The enzyme catalyses (3R)-hydroxybutanoate dimer + H2O = 2 (R)-3-hydroxybutanoate + H(+). It participates in lipid metabolism; butanoate metabolism. Functionally, participates in the degradation of poly-3-hydroxybutyrate (PHB). It works downstream of poly(3-hydroxybutyrate) depolymerase, hydrolyzing D(-)-3-hydroxybutyrate oligomers of various length (3HB-oligomers) into 3HB-monomers. This is D-(-)-3-hydroxybutyrate oligomer hydrolase from Paraburkholderia xenovorans (strain LB400).